Consider the following 225-residue polypeptide: Heptaprenylglyceryl phosphate synthase (225 aa).

Sn-glycerol 1-phosphate is bound at residue Lys-6. Mg(2+) contacts are provided by Asp-8 and Thr-34. Sn-glycerol 1-phosphate is bound by residues 153 to 158 (YVEYSG), Gly-183, and 203 to 204 (GN).

Belongs to the GGGP/HepGP synthase family. Group I subfamily. As to quaternary structure, homodimer. The cofactor is Mg(2+).

It carries out the reaction sn-glycerol 1-phosphate + all-trans-heptaprenyl diphosphate = 3-heptaprenyl-sn-glycero-1-phosphate + diphosphate. It participates in membrane lipid metabolism; glycerophospholipid metabolism. Prenyltransferase that catalyzes in vivo the transfer of the heptaprenyl moiety of heptaprenyl pyrophosphate (HepPP; 35 carbon atoms) to the C3 hydroxyl of sn-glycerol-1-phosphate (G1P), producing heptaprenylglyceryl phosphate (HepGP). This reaction is an ether-bond-formation step in the biosynthesis of archaea-type G1P-based membrane lipids found in Bacillales. The protein is Heptaprenylglyceryl phosphate synthase of Listeria monocytogenes serotype 4b (strain F2365).